The following is a 222-amino-acid chain: Protein MKS1 (222 aa).

Positions 1 to 61 (MDPSEYFAGG…PNRDQPPPYI (61 aa)) are disordered. Positions 12–21 (PSDQQNQKRQ) are enriched in polar residues. Position 30 is a phosphoserine (Ser30). Basic residues predominate over residues 37–46 (DSHKIKKPPK). The span at 47 to 61 (HPAPPPNRDQPPPYI) shows a compositional bias: pro residues. Ser72 is modified (phosphoserine). Residues 83–92 (FMNVVQRLTG) carry the VQ motif. Residues 105 to 130 (GDVSPAARLASTENASPRGGKEPAAR) are disordered. Ser108 and Ser120 each carry phosphoserine.

Interacts with MPK4, WRKY25 and WRKY33. Post-translationally, phosphorylated on serine residue by MPK4.

It localises to the nucleus. Functionally, regulator of plant defense response. May contribute to MPK4-regulated defense activation by coupling the kinase to specific WRKY transcription factors. The chain is Protein MKS1 (MKS1) from Arabidopsis thaliana (Mouse-ear cress).